A 951-amino-acid polypeptide reads, in one-letter code: Spliceosome associated factor 3, U4/U6 recycling protein (951 aa).

The disordered stretch occupies residues 1 to 58 (MAATGNEEQTLLPDIEEEAEGMEREMESEDDEEEGMGVEHSEEEDEEDTSEDERENEA). Over residues 14 to 56 (DIEEEAEGMEREMESEDDEEEGMGVEHSEEEDEEDTSEDEREN) the composition is skewed to acidic residues. 8 HAT repeats span residues 88–120 (GKLH…DEIR), 126–157 (SDRE…YSIG), 163–199 (GGIE…FEIV), 222–255 (AQLE…WADD), 304–336 (GDPA…YLDR), 339–371 (KIKD…ALER), 374–410 (ADHQ…YLRR), and 467–500 (KNMQ…LERS). A necessary and sufficient for U6 snRNA binding region spans residues 517–941 (CTSDYPEHVC…LDTQTKSLSN (425 aa)). A coiled-coil region spans residues 533–593 (ERVEGSLEDW…VKADKKAQKK (61 aa)). Positions 567–581 (EALHARQEEEKAEQR) are enriched in basic and acidic residues. The segment at 567–686 (EALHARQEEE…HDMPKEQRKD (120 aa)) is disordered. A compositionally biased stretch (basic residues) spans 582 to 596 (RKVKADKKAQKKGQK). Over residues 608–619 (DDDEEEWGEEAE) the composition is skewed to acidic residues. Residues 674–686 (RQPHDMPKEQRKD) show a composition bias toward basic and acidic residues. 2 RRM domains span residues 688-766 (NCVF…PCVD) and 785-862 (HKIF…ISNP). The segment at 905 to 938 (RQSTPDAKAENGTISAPHATVTDGETSLDTQTKS) is disordered. Positions 927–938 (DGETSLDTQTKS) are enriched in polar residues.

The protein localises to the nucleus. The protein resides in the nucleoplasm. Its subcellular location is the cajal body. It localises to the nucleus speckle. It is found in the cytoplasm. Functionally, U6 snRNP-binding protein that functions as a recycling factor of the splicing machinery. Promotes the initial reassembly of U4 and U6 snRNPs following their ejection from the spliceosome during its maturation. May also function as a substrate targeting factor for deubiquitinases and mediate the deubiquitination of components of the spliceosome and histones. This Danio rerio (Zebrafish) protein is Spliceosome associated factor 3, U4/U6 recycling protein.